Reading from the N-terminus, the 311-residue chain is MSFAHRHLLGIEQLSPADITAILDLAETYVALNRQSAKHSDVLSGLTQINMFFENSTRTQASFELAGKRLGADVMNMSMQASSIKKGETLIDTAMTLNAMHPDLLVVRHPHSGAVDLLAQKVNCAVLNAGDGRHEHPTQALLDALTIRRAKGRLHRLNIAICGDIAHSRVARSNLILLGKMENRIRLIGPPTLVPAQFAEFGAEVYDDMREGLKDVDVVMMLRLQRERMDGGFIPSEREYYHRYGLDREKLGLAKPDAIVMHPGPMNRGVEIDGTLADDINRSVIQEQVEMGVAVRMAAMELLARNLREAT.

Carbamoyl phosphate contacts are provided by R58 and T59. Residue K86 participates in L-aspartate binding. Residues R108, H136, and Q139 each contribute to the carbamoyl phosphate site. 2 residues coordinate L-aspartate: R169 and R223. Residues G264 and P265 each coordinate carbamoyl phosphate.

It belongs to the aspartate/ornithine carbamoyltransferase superfamily. ATCase family. As to quaternary structure, heterododecamer (2C3:3R2) of six catalytic PyrB chains organized as two trimers (C3), and six regulatory PyrI chains organized as three dimers (R2).

It carries out the reaction carbamoyl phosphate + L-aspartate = N-carbamoyl-L-aspartate + phosphate + H(+). Its pathway is pyrimidine metabolism; UMP biosynthesis via de novo pathway; (S)-dihydroorotate from bicarbonate: step 2/3. Its function is as follows. Catalyzes the condensation of carbamoyl phosphate and aspartate to form carbamoyl aspartate and inorganic phosphate, the committed step in the de novo pyrimidine nucleotide biosynthesis pathway. The polypeptide is Aspartate carbamoyltransferase catalytic subunit (Ruegeria pomeroyi (strain ATCC 700808 / DSM 15171 / DSS-3) (Silicibacter pomeroyi)).